Reading from the N-terminus, the 393-residue chain is Chalcone synthase (393 aa).

The active site involves C164.

This sequence belongs to the thiolase-like superfamily. Chalcone/stilbene synthases family.

It carries out the reaction (E)-4-coumaroyl-CoA + 3 malonyl-CoA + 3 H(+) = 2',4,4',6'-tetrahydroxychalcone + 3 CO2 + 4 CoA. It participates in secondary metabolite biosynthesis; flavonoid biosynthesis. The primary product of this enzyme is 4,2',4',6'-tetrahydroxychalcone (also termed naringenin-chalcone or chalcone) which can under specific conditions spontaneously isomerize into naringenin. The polypeptide is Chalcone synthase (CHS) (Vitis vinifera (Grape)).